Here is a 103-residue protein sequence, read N- to C-terminus: MSQFTNVAITKEANIYFDGNVTSRSVHFADGTKKTLGIMLPGDYEFNTGAKELMEILSGDLEIQLVGEEWRKISAGESFEVPANSSFKLKIYKITDYCCSFLG.

Belongs to the nucleoside phosphorylase PpnP family.

The catalysed reaction is a purine D-ribonucleoside + phosphate = a purine nucleobase + alpha-D-ribose 1-phosphate. It carries out the reaction adenosine + phosphate = alpha-D-ribose 1-phosphate + adenine. It catalyses the reaction cytidine + phosphate = cytosine + alpha-D-ribose 1-phosphate. The enzyme catalyses guanosine + phosphate = alpha-D-ribose 1-phosphate + guanine. The catalysed reaction is inosine + phosphate = alpha-D-ribose 1-phosphate + hypoxanthine. It carries out the reaction thymidine + phosphate = 2-deoxy-alpha-D-ribose 1-phosphate + thymine. It catalyses the reaction uridine + phosphate = alpha-D-ribose 1-phosphate + uracil. The enzyme catalyses xanthosine + phosphate = alpha-D-ribose 1-phosphate + xanthine. Functionally, catalyzes the phosphorolysis of diverse nucleosides, yielding D-ribose 1-phosphate and the respective free bases. Can use uridine, adenosine, guanosine, cytidine, thymidine, inosine and xanthosine as substrates. Also catalyzes the reverse reactions. In Chlorobium chlorochromatii (strain CaD3), this protein is Pyrimidine/purine nucleoside phosphorylase.